Reading from the N-terminus, the 118-residue chain is Large ribosomal subunit protein bL20 (118 aa).

The protein belongs to the bacterial ribosomal protein bL20 family.

Its function is as follows. Binds directly to 23S ribosomal RNA and is necessary for the in vitro assembly process of the 50S ribosomal subunit. It is not involved in the protein synthesizing functions of that subunit. This is Large ribosomal subunit protein bL20 from Parvibaculum lavamentivorans (strain DS-1 / DSM 13023 / NCIMB 13966).